Consider the following 268-residue polypeptide: Pantothenate synthetase (268 aa).

18–25 contacts ATP; that stretch reads MGYLHEGH. His-25 acts as the Proton donor in catalysis. Gln-49 serves as a coordination point for (R)-pantoate. Gln-49 contacts beta-alanine. An ATP-binding site is contributed by 135–138; that stretch reads GQKD. Gln-141 contributes to the (R)-pantoate binding site. ATP-binding positions include Ile-164 and 172–175; that span reads LSSR.

The protein belongs to the pantothenate synthetase family. Homodimer.

Its subcellular location is the cytoplasm. The enzyme catalyses (R)-pantoate + beta-alanine + ATP = (R)-pantothenate + AMP + diphosphate + H(+). The protein operates within cofactor biosynthesis; (R)-pantothenate biosynthesis; (R)-pantothenate from (R)-pantoate and beta-alanine: step 1/1. Its function is as follows. Catalyzes the condensation of pantoate with beta-alanine in an ATP-dependent reaction via a pantoyl-adenylate intermediate. This Dehalococcoides mccartyi (strain CBDB1) protein is Pantothenate synthetase.